A 393-amino-acid chain; its full sequence is Acyltransferase ato1 (393 aa).

It belongs to the lysine N-acyltransferase mbtK family.

It participates in siderophore biosynthesis; ferrichrome biosynthesis. Its function is as follows. L-ornithine N(5)-monooxygenase; part of the siderophore biosynthetic pathway. Omphalotus olearius produces ferrichrome A, but no other siderophore has been detected. Ferrichrome A consists of a hexapeptide ring made up of one glycine, two serine, and three N(5)-hydroxyornithine amino acid residues, the latter acylated by trans-(alpha-methyl)-glutaconic acid residues. The biosynthesis of ferrichrome A depends on the hydroxylation of ornithine to N(5)-hydroxyornithine, catalyzed by the monooxygenase omo1. The second step, the acylation of N(5)-hydroxy-L-ornithine is probably catalyzed by the N-acyltransferase ato1. Finally, assembly of ferrichrome A is catalyzed by the nonribosomal peptide synthase (NRPS) fso1. The sequence is that of Acyltransferase ato1 from Omphalotus olearius (Jack o'lantern).